Consider the following 125-residue polypeptide: Oxytocin-neurophysin 1 (125 aa).

The N-terminal stretch at 1-19 (MAGSSLACCLLGLLALTSA) is a signal peptide. The cysteines at positions 20 and 25 are disulfide-linked. A Glycine amide modification is found at G28. Cystine bridges form between C41–C85, C44–C58, C52–C75, C59–C65, C92–C104, C98–C116, and C105–C110.

The protein belongs to the vasopressin/oxytocin family. Interacts with oxytocin receptor (Ki=1.5 nM). Interacts with vasopressin V1aR/AVPR1A (Ki=37 nM), V1bR/AVPR1B (Ki=222 nM), and V2R/AVPR2 receptors (Ki=823 nM).

In terms of biological role, neurophysin 1 specifically binds oxytocin. Functionally, oxytocin causes contraction of the smooth muscle of the uterus and of the mammary gland. Acts by binding to oxytocin receptor (OXTR). In Ovis aries (Sheep), this protein is Oxytocin-neurophysin 1 (OXT).